A 344-amino-acid chain; its full sequence is Ferredoxin--NADP reductase (344 aa).

Residues Ser-12, Asp-31, Lys-39, Tyr-43, Val-83, Ile-118, Asp-285, and Ser-326 each contribute to the FAD site.

This sequence belongs to the ferredoxin--NADP reductase type 2 family. As to quaternary structure, homodimer. Requires FAD as cofactor.

It catalyses the reaction 2 reduced [2Fe-2S]-[ferredoxin] + NADP(+) + H(+) = 2 oxidized [2Fe-2S]-[ferredoxin] + NADPH. The sequence is that of Ferredoxin--NADP reductase from Staphylococcus aureus (strain JH1).